We begin with the raw amino-acid sequence, 781 residues long: Catenin beta-1 (781 aa).

The segment at 34–56 (GIHSGATTTAPSLSGKGNPEDED) is disordered. 10 ARM repeats span residues 141–180 (NYQDDAELATRAIPELTKLLNDEDQVVVNKAAVMVHQLSK), 225–264 (REGLLAIFKSGGIPALVKMLGSPVDSVLFYAITTLHNLLL), 267–306 (EGAKMAVRLAGGLQKMVALLNKTNVKFLAITTDCLQILAY), 351–390 (SSNKPAIVEAGGMQALGLHLTDSSQRLVQNCLWTLRNLSD), 391–429 (AATKQEGMEGLLGTLVQLLGSDDINVVTCAAGILSNLTC), 432–473 (YKNK…HLTS), 479–519 (EMAQ…NLAL), 521–562 (PANH…QFVE), 584–623 (IHNRIVIRGLNTIPLFVQLLYSPIENIQRVAAGVLCDVAQ), and 625–664 (KEAAEAIEAEGATAPLTELLHSRNEGVATYAAAVLFRMSE). The segment covering 735 to 745 (MDHDMGGHHPG) has biased composition (basic and acidic residues). The tract at residues 735–781 (MDHDMGGHHPGADYPVDGLPDLSHAQDLMDGLPPGDSNQLAWFDTDL) is disordered.

It belongs to the beta-catenin family. As to quaternary structure, interacts with EP-Cadherin/CDH3. Interacts with custos; the interaction is positively regulated by Wnt stimulation. In terms of processing, phosphorylation by gsk3b promotes ubiquitination and subsequent degradation by the proteasome. Ubiquitinated when phosphorylated by gsk3b, leading to its degradation. Expressed at intercalated disks in the heart (at protein level).

The protein resides in the cytoplasm. It localises to the nucleus. The protein localises to the cell membrane. Its function is as follows. Key downstream component of the canonical Wnt signaling pathway. In the absence of Wnt, forms a complex with axin1, axin2, apc, csnk1a1 and gsk3b that promotes phosphorylation on N-terminal Ser and Thr residues and ubiquitination of ctnnb1 and its subsequent degradation by the proteasome. In the presence of Wnt ligand, ctnnb1 is not ubiquitinated and accumulates in the nucleus, where it acts as a coactivator for transcription factors of the TCF/LEF family, leading to activate Wnt responsive genes. Plays a key role in dorsoventral patterning: in prospective ventral blastomeres, its down-regulation by axin1 and axin2 leads to inhibit the Wnt signaling pathway, while in prospective dorsal blastomeres, degradation of axin results in stabilization and nuclear translocation of ctnnb1. This Xenopus laevis (African clawed frog) protein is Catenin beta-1.